An 888-amino-acid chain; its full sequence is Extra-large guanine nucleotide-binding protein 1 (888 aa).

Residues 98 to 119 (SVIEHTEEEEEEEGGDGEDCEL) are disordered. A compositionally biased stretch (acidic residues) spans 103-118 (TEEEEEEEGGDGEDCE). A Nuclear localization signal motif is present at residues 205-222 (RRVRVVPVKKQPQTKGKK). Residues 225–268 (CYRCFKGSRFTEKEVCLVCDAKYCNSCVLRAMGSMPEGRKCVTC) form an RING-type; degenerate zinc finger. One can recognise a G-alpha domain in the interval 482–879 (TLQKILLVGN…NICMSEYSMY (398 aa)). The G1 motif stretch occupies residues 485-498 (KILLVGNSGSGTST). GTP contacts are provided by residues 490–498 (GNSGSGTST) and 661–669 (DILYAEGVT). Ca(2+) is bound by residues Ser497 and Thr669. The interval 661–669 (DILYAEGVT) is G2 motif. The segment at 702 to 711 (YQLIRVPSRG) is G3 motif. Positions 770–777 (LLILNKYD) are G4 motif. 774–777 (NKYD) contributes to the GTP binding site. Residues 843–848 (SKSLDP) form a G5 motif region.

This sequence belongs to the G-alpha family. XLG subfamily. The cofactor is Ca(2+). Ubiquitous. Strongly expressed in vascular tissues, root and shoot meristems and lateral root primordia.

It localises to the nucleus. Guanine nucleotide-binding proteins (G proteins) are involved as modulators or transducers in various transmembrane signaling systems. Binds GTP with specificity. Plays a role in the root morphogenesis by regulation of the cell proliferation. This chain is Extra-large guanine nucleotide-binding protein 1 (XLG1), found in Arabidopsis thaliana (Mouse-ear cress).